The chain runs to 313 residues: Protein YABBY 3 (313 aa).

Residues 65-92 (CHYCDTVLVVSVPSSSLFETVTVRCGHC) form a C4-type zinc finger. Disordered regions lie at residues 107–149 (TTAA…SLLD) and 180–221 (NNSP…KRQR). The span at 112–128 (APPPPPPPPPPPPPPAA) shows a compositional bias: pro residues.

This sequence belongs to the YABBY family. Expressed in shoot apex and young inflorescences.

The protein localises to the nucleus. The chain is Protein YABBY 3 (YAB3) from Oryza sativa subsp. japonica (Rice).